Reading from the N-terminus, the 566-residue chain is MVILQQGDYVWMDLRSGQEFDVPIGAVVKLCDSGQIQVVDDEGNEHWISPQNATHIKPMHPTSVTGMMEDMIQHLGDLNEAGILRNLLIRYRDHLIYTYTGSILVAVNPYQLLSIYSPEHIRQYTNKKIGEMPPHIFAIADNCYFNMKRNSRDQCCIISGESGAGKTESTKLILQFLAAISGQHSWIEQQVLEATPILEAFGNAKTIRNDNSSRFGKYIDIHFNKRGAIEGARIEQYLLEKSRVCRQAPDERNYHVFYCMLEGMSEEQKKKLGLGQATDYNYLAMGNCITCEGREDSQEYANIRSAMKVLMFTDTENWEISKLLAAILHLGNLQYKDRTFENLDACEVLFSTALATAASLLEVNPPDLMNCLTSRTLITRGETVSTPLSREQALDVRDAFVKGIYGRLFVWIVDKINAAIYKPPSQEVKNPRRSIGLLDIFGFENFAVNSFEQLCINFANEHLQQFFVRHVFKLEQEEYDLESIDWLHIEFTDNQDALDMIANKPMNIISLIDEESKFPKGTDTTMLHKLNSQHRLNSNYIPPKYNHETQFGINHFAGVVYYESQG.

The Myosin motor domain occupies 67–566 (MMEDMIQHLG…AGVVYYESQG (500 aa)). Position 160–167 (160–167 (GESGAGKT)) interacts with ATP.

This sequence belongs to the TRAFAC class myosin-kinesin ATPase superfamily. Myosin family. Might homodimerize in a two headed molecule through the formation of a coiled-coil rod. Identified in a complex with USH1C and USH1G. Interacts with MYRIP. Interacts with RPE65. Interacts with CIB2. May interact with CALM. Interacts with WHRN. Interacts with PLEKHB1 (via PH domain). Interacts with PCDH15. Interacts with TWF2. Interacts with USH1G. Interacts with MYH9. Interacts (via MyTH4-FERM domains) with cytoplasmic regions of ADGRV1 and USH2A. Interacts with PDZD7 (via MyTH4-FERM domains). Interacts with CALML4.

It is found in the cytoplasm. The protein localises to the cell cortex. It localises to the cytoskeleton. The protein resides in the synapse. In terms of biological role, myosins are actin-based motor molecules with ATPase activity. Unconventional myosins serve in intracellular movements. Their highly divergent tails bind to membranous compartments, which are then moved relative to actin filaments. In the retina, plays an important role in the renewal of the outer photoreceptor disks. Plays an important role in the distribution and migration of retinal pigment epithelial (RPE) melanosomes and phagosomes, and in the regulation of opsin transport in retinal photoreceptors. In the inner ear, plays an important role in differentiation, morphogenesis and organization of cochlear hair cell bundles. Motor protein that is a part of the functional network formed by USH1C, USH1G, CDH23 and MYO7A that mediates mechanotransduction in cochlear hair cells. Required for normal hearing. Involved in hair-cell vesicle trafficking of aminoglycosides, which are known to induce ototoxicity. The chain is Unconventional myosin-VIIa (MYO7A) from Sus scrofa (Pig).